Consider the following 346-residue polypeptide: Galactitol 1-phosphate 5-dehydrogenase (346 aa).

Residues Cys38, His59, Cys89, Cys92, Cys95, Cys103, and Glu144 each coordinate Zn(2+).

The protein belongs to the zinc-containing alcohol dehydrogenase family. The cofactor is Zn(2+).

The catalysed reaction is galactitol 1-phosphate + NAD(+) = keto-D-tagatose 6-phosphate + NADH + H(+). Converts galactitol 1-phosphate to tagatose 6-phosphate. This Escherichia coli O157:H7 protein is Galactitol 1-phosphate 5-dehydrogenase (gatD).